Here is a 400-residue protein sequence, read N- to C-terminus: tRNA-specific adenosine deaminase 1 (400 aa).

The 325-residue stretch at 76–400 (SIATGVKALP…WIPTRTDDVK (325 aa)) folds into the A to I editase domain. Residue H101 coordinates Zn(2+). E103 acts as the Proton donor in catalysis. R108 contacts 1D-myo-inositol hexakisphosphate. C157 and C223 together coordinate Zn(2+). 1D-myo-inositol hexakisphosphate-binding residues include K226, R232, K369, and R375.

The protein belongs to the ADAT1 family. 1D-myo-inositol hexakisphosphate is required as a cofactor. It depends on Zn(2+) as a cofactor.

The enzyme catalyses adenosine(37) in tRNA(Ala) + H2O + H(+) = inosine(37) in tRNA(Ala) + NH4(+). Its function is as follows. Deaminates adenosine-37 to inosine in tRNA-Ala. This chain is tRNA-specific adenosine deaminase 1 (TAD1), found in Saccharomyces cerevisiae (strain ATCC 204508 / S288c) (Baker's yeast).